The following is a 237-amino-acid chain: Uridylate kinase (237 aa).

9-12 (KLSG) contacts ATP. Positions 17–22 (GSQGYG) are involved in allosteric activation by GTP. UMP is bound at residue glycine 51. Glycine 52 and arginine 56 together coordinate ATP. UMP-binding positions include aspartate 71 and 132 to 139 (CGNPFFTT). ATP-binding residues include threonine 159, tyrosine 165, and aspartate 168.

It belongs to the UMP kinase family. As to quaternary structure, homohexamer.

The protein localises to the cytoplasm. It catalyses the reaction UMP + ATP = UDP + ADP. Its pathway is pyrimidine metabolism; CTP biosynthesis via de novo pathway; UDP from UMP (UMPK route): step 1/1. Its activity is regulated as follows. Allosterically activated by GTP. Inhibited by UTP. Its function is as follows. Catalyzes the reversible phosphorylation of UMP to UDP. This chain is Uridylate kinase, found in Synechococcus sp. (strain CC9605).